Reading from the N-terminus, the 476-residue chain is Glycogen synthase (476 aa).

K15 lines the ADP-alpha-D-glucose pocket.

It belongs to the glycosyltransferase 1 family. Bacterial/plant glycogen synthase subfamily.

The enzyme catalyses [(1-&gt;4)-alpha-D-glucosyl](n) + ADP-alpha-D-glucose = [(1-&gt;4)-alpha-D-glucosyl](n+1) + ADP + H(+). Its pathway is glycan biosynthesis; glycogen biosynthesis. Functionally, synthesizes alpha-1,4-glucan chains using ADP-glucose. This is Glycogen synthase (glgA) from Haemophilus influenzae (strain ATCC 51907 / DSM 11121 / KW20 / Rd).